The primary structure comprises 181 residues: Oligoribonuclease (181 aa).

An Exonuclease domain is found at 8-171 (LIWIDLEMTG…DDIRESIAEL (164 aa)). Residue Tyr129 is part of the active site.

Belongs to the oligoribonuclease family.

Its subcellular location is the cytoplasm. Functionally, 3'-to-5' exoribonuclease specific for small oligoribonucleotides. The sequence is that of Oligoribonuclease from Vibrio cholerae serotype O1 (strain ATCC 39541 / Classical Ogawa 395 / O395).